The sequence spans 278 residues: Elongation factor Ts (278 aa).

An involved in Mg(2+) ion dislocation from EF-Tu region spans residues 82–85 (TDFV).

This sequence belongs to the EF-Ts family.

It is found in the cytoplasm. Associates with the EF-Tu.GDP complex and induces the exchange of GDP to GTP. It remains bound to the aminoacyl-tRNA.EF-Tu.GTP complex up to the GTP hydrolysis stage on the ribosome. The protein is Elongation factor Ts of Streptomyces griseus subsp. griseus (strain JCM 4626 / CBS 651.72 / NBRC 13350 / KCC S-0626 / ISP 5235).